A 148-amino-acid chain; its full sequence is Cell division protein SepF (148 aa).

Positions 1–59 (MNNKFKDFFGFGDNDSYEERDAYEEHYDEQEEMQNSNRPTNSRDSNVVSIKAGQAGSGP) are disordered. Residues 33–48 (MQNSNRPTNSRDSNVV) show a composition bias toward polar residues.

The protein belongs to the SepF family. Homodimer. Interacts with FtsZ.

It is found in the cytoplasm. Cell division protein that is part of the divisome complex and is recruited early to the Z-ring. Probably stimulates Z-ring formation, perhaps through the cross-linking of FtsZ protofilaments. Its function overlaps with FtsA. This is Cell division protein SepF from Lactobacillus delbrueckii subsp. bulgaricus (strain ATCC BAA-365 / Lb-18).